The chain runs to 240 residues: Uridylate kinase (240 aa).

Residue 15-18 (KLSG) coordinates ATP. The segment at 23-28 (GSEGFG) is involved in allosteric activation by GTP. Position 57 (G57) interacts with UMP. ATP contacts are provided by G58 and R62. Residues D77 and 138-145 (TGNPFFTT) contribute to the UMP site. T165, Y171, and D174 together coordinate ATP.

It belongs to the UMP kinase family. As to quaternary structure, homohexamer.

It is found in the cytoplasm. The catalysed reaction is UMP + ATP = UDP + ADP. It functions in the pathway pyrimidine metabolism; CTP biosynthesis via de novo pathway; UDP from UMP (UMPK route): step 1/1. Allosterically activated by GTP. Inhibited by UTP. Catalyzes the reversible phosphorylation of UMP to UDP. This Photobacterium profundum (strain SS9) protein is Uridylate kinase.